A 234-amino-acid polypeptide reads, in one-letter code: uncharacterized protein (234 aa).

This is an uncharacterized protein from Methanocaldococcus jannaschii (strain ATCC 43067 / DSM 2661 / JAL-1 / JCM 10045 / NBRC 100440) (Methanococcus jannaschii).